The following is a 341-amino-acid chain: tRNA N6-adenosine threonylcarbamoyltransferase (341 aa).

The Fe cation site is built by histidine 112 and histidine 116. Substrate contacts are provided by residues 138 to 142, aspartate 171, glycine 184, aspartate 188, and asparagine 279; that span reads TVSGG. Aspartate 307 lines the Fe cation pocket.

It belongs to the KAE1 / TsaD family. Fe(2+) is required as a cofactor.

It is found in the cytoplasm. The catalysed reaction is L-threonylcarbamoyladenylate + adenosine(37) in tRNA = N(6)-L-threonylcarbamoyladenosine(37) in tRNA + AMP + H(+). Required for the formation of a threonylcarbamoyl group on adenosine at position 37 (t(6)A37) in tRNAs that read codons beginning with adenine. Is involved in the transfer of the threonylcarbamoyl moiety of threonylcarbamoyl-AMP (TC-AMP) to the N6 group of A37, together with TsaE and TsaB. TsaD likely plays a direct catalytic role in this reaction. This Riemerella anatipestifer (Moraxella anatipestifer) protein is tRNA N6-adenosine threonylcarbamoyltransferase.